The chain runs to 397 residues: Digeranylgeranylglycerophospholipid reductase 3 (397 aa).

A16, D35, C46, A47, G49, R102, A126, D283, G295, and I296 together coordinate FAD. A 2,3-bis-O-(geranylgeranyl)-sn-glycerol 1-phospholipid is bound at residue K338.

This sequence belongs to the geranylgeranyl reductase family. DGGGPL reductase subfamily. FAD serves as cofactor.

The catalysed reaction is a 2,3-bis-O-phytanyl-sn-glycerol 1-phospholipid + 8 A = a 2,3-bis-O-(geranylgeranyl)-sn-glycerol 1-phospholipid + 8 AH2. It carries out the reaction 2,3-bis-O-(phytanyl)-sn-glycerol 1-phosphate + 8 A = 2,3-bis-O-(geranylgeranyl)-sn-glycerol 1-phosphate + 8 AH2. It catalyses the reaction CDP-2,3-bis-O-(geranylgeranyl)-sn-glycerol + 8 AH2 = CDP-2,3-bis-O-(phytanyl)-sn-glycerol + 8 A. The enzyme catalyses archaetidylserine + 8 AH2 = 2,3-bis-O-phytanyl-sn-glycero-3-phospho-L-serine + 8 A. It functions in the pathway membrane lipid metabolism; glycerophospholipid metabolism. Functionally, is involved in the reduction of 2,3-digeranylgeranylglycerophospholipids (unsaturated archaeols) into 2,3-diphytanylglycerophospholipids (saturated archaeols) in the biosynthesis of archaeal membrane lipids. Catalyzes the formation of archaetidic acid (2,3-di-O-phytanyl-sn-glyceryl phosphate) from 2,3-di-O-geranylgeranylglyceryl phosphate (DGGGP) via the hydrogenation of each double bond of the isoprenoid chains. Is also probably able to reduce double bonds of geranyl groups in CDP-2,3-bis-O-(geranylgeranyl)-sn-glycerol and archaetidylserine, thus acting at various stages in the biosynthesis of archaeal membrane lipids. The chain is Digeranylgeranylglycerophospholipid reductase 3 from Methanosphaera stadtmanae (strain ATCC 43021 / DSM 3091 / JCM 11832 / MCB-3).